Reading from the N-terminus, the 496-residue chain is Xylulose kinase (496 aa).

83 to 84 (MH) serves as a coordination point for substrate. The active-site Proton acceptor is the Asp-237.

Belongs to the FGGY kinase family.

The enzyme catalyses D-xylulose + ATP = D-xylulose 5-phosphate + ADP + H(+). Functionally, catalyzes the phosphorylation of D-xylulose to D-xylulose 5-phosphate. This is Xylulose kinase from Staphylococcus epidermidis (strain ATCC 35984 / DSM 28319 / BCRC 17069 / CCUG 31568 / BM 3577 / RP62A).